A 98-amino-acid chain; its full sequence is NADH-ubiquinone oxidoreductase chain 4L (98 aa).

The next 3 membrane-spanning stretches (helical) occupy residues 1–21 (MSLTYMNMFMAFTISLLGLLM), 29–49 (SLLCLEGMMLSLFVMMTMVIL), and 61–81 (IILLVFAACEAALGLSLLVMV).

This sequence belongs to the complex I subunit 4L family. Core subunit of respiratory chain NADH dehydrogenase (Complex I) which is composed of 45 different subunits.

It localises to the mitochondrion inner membrane. It carries out the reaction a ubiquinone + NADH + 5 H(+)(in) = a ubiquinol + NAD(+) + 4 H(+)(out). Functionally, core subunit of the mitochondrial membrane respiratory chain NADH dehydrogenase (Complex I) which catalyzes electron transfer from NADH through the respiratory chain, using ubiquinone as an electron acceptor. Part of the enzyme membrane arm which is embedded in the lipid bilayer and involved in proton translocation. The sequence is that of NADH-ubiquinone oxidoreductase chain 4L (MT-ND4L) from Vampyressa thyone (Northern little yellow-eared bat).